Here is a 186-residue protein sequence, read N- to C-terminus: MVKLAAKCILAGDPAVGKTALVQMFRSDGTHFQKNYTLTTGVDLVVKTVPVLDTNDSVELFIFDSAGKELFSEMLDKLWENPNVLCLVYDVTNEQSFISCTKWLEKVRSQTSGISLPGVLVGTKTDLAGRQTVDSAQAQVWALSQGLEFFETSVKEMDNYEAPFHCLAKQFYQLYREKVDIFHTLV.

Residues 12–19 (GDPAVGKT), 64–68 (DSAGK), and 123–126 (TKTD) contribute to the GTP site.

It belongs to the small GTPase superfamily. Rab family. In terms of assembly, component of the IFT complex B, at least composed of IFT20, IFT22, IFT25, IFT27, IFT46, IFT52, TRAF3IP1/IFT54, IFT57, IFT74, IFT80, IFT81, and IFT88. Interacts with IFT25. Interacts with IFT70B. Interacts with RABL2/RABL2A; binding is equal in the presence of GTP or GDP. Interacts with IFT88. Interacts with ARL6; recognizes and binds with the GTP-free form of ARL6. Expressed predominantly in the testis (at protein level). Co-localizes with RABL2/RABL2A in the midpiece of elongated spermatids within the testis (at protein level).

Its subcellular location is the cell projection. The protein resides in the cilium. The protein localises to the cytoplasm. It localises to the flagellum. Its function is as follows. Small GTPase-like component of the intraflagellar transport (IFT) complex B that promotes the exit of the BBSome complex from cilia via its interaction with ARL6. Not involved in entry of the BBSome complex into cilium. Prevents aggregation of GTP-free ARL6. Required for hedgehog signaling. Forms a subcomplex within the IFT complex B with IFT25. Its role in intraflagellar transport is mainly seen in tissues rich in ciliated cells such as kidney and testis. Essential for male fertility, spermiogenesis and sperm flagella formation. Plays a role in the early development of the kidney. May be involved in the regulation of ureteric bud initiation. The protein is Intraflagellar transport protein 27 homolog (Ift27) of Mus musculus (Mouse).